The chain runs to 408 residues: Exo-alpha-sialidase ARB_03431 (408 aa).

The N-terminal stretch at 1–22 (MGIKQWLLSLVVVAISATATQA) is a signal peptide. Residues arginine 62, arginine 81, aspartate 87, and glutamine 150 each contribute to the substrate site. A glycan (N-linked (GlcNAc...) asparagine) is linked at asparagine 237. Substrate is bound by residues arginine 267, arginine 324, 324-325 (RT), 333-334 (YD), lysine 339, tyrosine 360, aspartate 378, and 378-380 (DWY). A glycan (N-linked (GlcNAc...) asparagine) is linked at asparagine 398.

Belongs to the glycosyl hydrolase 33 family.

The protein localises to the secreted. It carries out the reaction Hydrolysis of alpha-(2-&gt;3)-, alpha-(2-&gt;6)-, alpha-(2-&gt;8)- glycosidic linkages of terminal sialic acid residues in oligosaccharides, glycoproteins, glycolipids, colominic acid and synthetic substrates.. Functionally, sialidase is able to release sialic acid from a wide variety of natural substrates. The polypeptide is Exo-alpha-sialidase ARB_03431 (Arthroderma benhamiae (strain ATCC MYA-4681 / CBS 112371) (Trichophyton mentagrophytes)).